A 450-amino-acid chain; its full sequence is UDP-N-acetylmuramoylalanine--D-glutamate ligase (450 aa).

115 to 121 contributes to the ATP binding site; the sequence is GTNGKST.

The protein belongs to the MurCDEF family.

The protein resides in the cytoplasm. It carries out the reaction UDP-N-acetyl-alpha-D-muramoyl-L-alanine + D-glutamate + ATP = UDP-N-acetyl-alpha-D-muramoyl-L-alanyl-D-glutamate + ADP + phosphate + H(+). The protein operates within cell wall biogenesis; peptidoglycan biosynthesis. Functionally, cell wall formation. Catalyzes the addition of glutamate to the nucleotide precursor UDP-N-acetylmuramoyl-L-alanine (UMA). This Syntrophotalea carbinolica (strain DSM 2380 / NBRC 103641 / GraBd1) (Pelobacter carbinolicus) protein is UDP-N-acetylmuramoylalanine--D-glutamate ligase.